Here is a 195-residue protein sequence, read N- to C-terminus: Imidazoleglycerol-phosphate dehydratase (195 aa).

Belongs to the imidazoleglycerol-phosphate dehydratase family.

The protein resides in the cytoplasm. It catalyses the reaction D-erythro-1-(imidazol-4-yl)glycerol 3-phosphate = 3-(imidazol-4-yl)-2-oxopropyl phosphate + H2O. It participates in amino-acid biosynthesis; L-histidine biosynthesis; L-histidine from 5-phospho-alpha-D-ribose 1-diphosphate: step 6/9. This is Imidazoleglycerol-phosphate dehydratase from Nitrosomonas eutropha (strain DSM 101675 / C91 / Nm57).